A 444-amino-acid polypeptide reads, in one-letter code: Presenilin sel-12 (444 aa).

Residues 1–45 (MPSTRRQQEGGGADAETHTVYGTNLITNRNSQEDENVVEEAELKY) are Cytoplasmic-facing. A helical transmembrane segment spans residues 46 to 66 (GASHVIHLFVPVSLCMALVVF). At 67 to 101 (TMNTITFYSQNNGRHLLYTPFVRETDSIVEKGLMS) the chain is on the lumenal side. A helical transmembrane segment spans residues 102 to 122 (LGNALVMLCVVVLMTVLLIVF). At 123-130 (YKYKFYKL) the chain is on the cytoplasmic side. The helical transmembrane segment at 131-151 (IHGWLIVSSFLLLFLFTTIYV) threads the bilayer. Residues 152 to 163 (QEVLKSFDVSPS) are Lumenal-facing. The chain crosses the membrane as a helical span at residues 164-184 (ALLVLFGLGNYGVLGMMCIHW). The Cytoplasmic portion of the chain corresponds to 185 to 189 (KGPLR). The helical transmembrane segment at 190–210 (LQQFYLITMSALMALVFIKYL) threads the bilayer. Residues 211–212 (PE) lie on the Lumenal side of the membrane. Residues 213–233 (WTVWFVLFVISVWDLVAVLTP) form a helical membrane-spanning segment. D226 is a catalytic residue. Over 234-359 (KGPLRYLVET…RHEEEERGVK (126 aa)) the chain is Cytoplasmic. Residues 275-331 (TDPREPTSSDSNTSTAFPGEASCSSETPKRPKVKRIPQKVQIESNTTASTTQNSGVR) are disordered. Composition is skewed to polar residues over residues 282–300 (SSDSNTSTAFPGEASCSSE) and 315–329 (QIESNTTASTTQNSG). The helical transmembrane segment at 360–380 (LGLGDFIFYSVLLGKASSYFD) threads the bilayer. Residue D364 is part of the active site. Residues 381–384 (WNTT) lie on the Lumenal side of the membrane. A helical transmembrane segment spans residues 385–405 (IACYVAILIGLCFTLVLLAVF). The Cytoplasmic segment spans residues 406–413 (KRALPALP). Residues 410-412 (PAL) carry the PAL motif. The helical intramembrane region spans 414 to 434 (ISIFSGLIFYFCTRWIITPFV). Over 435–444 (TQVSQKCLLY) the chain is Cytoplasmic.

Belongs to the peptidase A22A family. As to quaternary structure, homodimer. Component of the gamma-secretase complex, a complex probably composed of the presenilin homodimer (sel-12, hop-1 or spe-4), nicastrin (aph-2), aph-1 and pen-2. Interacts with sel-10. Expressed in most neurons.

The protein resides in the endoplasmic reticulum membrane. It localises to the golgi apparatus membrane. Functionally, probable catalytic subunit of the gamma-secretase complex, an endoprotease complex that catalyzes the intramembrane cleavage of integral membrane proteins such as Notch receptors (lin-12 or glp-1). Provides the major presenilin function compared to hop-1 and spe-4. Required cell-autonomously for correct neurite connectivity of the AIY cholinergic interneurons and their correct functioning in thermotaxis. Required for mesodermal patterning of muscle function. Promotes basement membrane gap formation during tissue remodeling. This is Presenilin sel-12 from Caenorhabditis elegans.